The chain runs to 64 residues: Large ribosomal subunit protein eL37 (64 aa).

Zn(2+) contacts are provided by Cys-20, Cys-23, Cys-35, and Cys-38. A C4-type zinc finger spans residues 20–38 (CRRCGRRAFHVRKKVCAAC).

It belongs to the eukaryotic ribosomal protein eL37 family. Zn(2+) serves as cofactor.

Functionally, binds to the 23S rRNA. This Methanococcus maripaludis (strain DSM 14266 / JCM 13030 / NBRC 101832 / S2 / LL) protein is Large ribosomal subunit protein eL37.